The following is a 117-amino-acid chain: Ribosome-binding factor A (117 aa).

It belongs to the RbfA family. As to quaternary structure, monomer. Binds 30S ribosomal subunits, but not 50S ribosomal subunits or 70S ribosomes.

It is found in the cytoplasm. One of several proteins that assist in the late maturation steps of the functional core of the 30S ribosomal subunit. Associates with free 30S ribosomal subunits (but not with 30S subunits that are part of 70S ribosomes or polysomes). Required for efficient processing of 16S rRNA. May interact with the 5'-terminal helix region of 16S rRNA. This chain is Ribosome-binding factor A, found in Bacillus subtilis (strain 168).